We begin with the raw amino-acid sequence, 540 residues long: PTS system alpha-glucoside-specific EIICB component (540 aa).

Residues 1-420 (MLSQIQRFGG…LNLKTPGREE (420 aa)) form the PTS EIIC type-1 domain. 11 consecutive transmembrane segments (helical) span residues 12-32 (MFTP…AIML), 87-107 (ACLA…AMGM), 130-150 (IAGI…SGLV), 174-194 (FVVI…LLGW), 201-221 (IESL…VYIF), 225-245 (ILIP…GPAV), 277-297 (FALH…ALYF), 307-327 (VAGL…TEPL), 329-349 (FTFL…AATM), 352-372 (VMYI…QFLP), and 384-404 (SMMF…FVVF). Positions 448–530 (LGQAAGFLQA…ENLMKDSLST (83 aa)) constitute a PTS EIIB type-1 domain. Cys-470 functions as the Phosphocysteine intermediate; for EIIB activity in the catalytic mechanism.

The protein localises to the cell membrane. The phosphoenolpyruvate-dependent sugar phosphotransferase system (sugar PTS), a major carbohydrate active -transport system, catalyzes the phosphorylation of incoming sugar substrates concomitantly with their translocation across the cell membrane. This system is involved in alpha-glucoside transport. In terms of biological role, involved in the transport and simultaneous phosphorylation at O-6 of the glucosyl moiety of sucrose and its five linkage-isomeric alpha-D-glucosyl-D-fructoses. Can also transport maltose, isomaltose and maltitol, phosphorylating at O-6 of their non-reducing glucose portion. The protein is PTS system alpha-glucoside-specific EIICB component (aglA) of Klebsiella pneumoniae.